A 499-amino-acid chain; its full sequence is Probable malate:quinone oxidoreductase 4 (499 aa).

Belongs to the MQO family. It depends on FAD as a cofactor.

The catalysed reaction is (S)-malate + a quinone = a quinol + oxaloacetate. It participates in carbohydrate metabolism; tricarboxylic acid cycle; oxaloacetate from (S)-malate (quinone route): step 1/1. The protein is Probable malate:quinone oxidoreductase 4 of Staphylococcus epidermidis (strain ATCC 12228 / FDA PCI 1200).